The chain runs to 1125 residues: Telomerase reverse transcriptase (1125 aa).

Residues Met-1–Thr-239 form an RNA-interacting domain 1 region. Residues Val-58 to Leu-205 form a GQ motif region. Positions Trp-137–Leu-141 are required for regulating specificity for telomeric DNA and for processivity for primer elongation. Residues Gly-206–His-216 are compositionally biased toward polar residues. Residues Gly-206–Val-304 are disordered. Residues Asn-240 to Pro-328 are linker. The span at Ala-247 to Pro-259 shows a compositional bias: basic and acidic residues. The span at Ala-273–Lys-287 shows a compositional bias: low complexity. Residues Cys-306–Glu-528 form a required for oligomerization region. The RNA-interacting domain 2 stretch occupies residues Phe-329 to Asp-540. The TFLY; involved in RNA binding signature appears at Thr-332–Tyr-337. The interval Phe-381–Arg-511 is QFP motif. The interval Leu-402–Thr-422 is CP motif. Phosphoserine; by DYRK2 is present on Ser-447. Residues Glu-595–Leu-928 enclose the Reverse transcriptase domain. Tyr-697 carries the phosphotyrosine; by SRC-type Tyr-kinases modification. Residues Asp-702, Asp-861, and Asp-862 each contribute to the Mg(2+) site. The required for oligomerization stretch occupies residues Leu-907–Phe-921. The interval Trp-923 to Leu-927 is primer grip sequence. The tract at residues Asp-929 to Asp-1125 is CTE.

The protein belongs to the reverse transcriptase family. Telomerase subfamily. In terms of assembly, catalytic component of the telomerase holoenzyme complex composed of one molecule of TERT, one molecule of WRAP53/TCAB1, two molecules of H/ACA ribonucleoprotein complex subunits DKC1, NOP10, NHP2 and GAR1, and a telomerase RNA template component (TERC). The telomerase holoenzyme complex is associated with TEP1, SMG6/EST1A and POT1. The molecular chaperone HSP90/P23 complex is required for correct assembly and stabilization of the active telomerase. Interacts directly with HSP90A and PTGES3. Interacts with HSPA1A; the interaction occurs in the absence of TERC and dissociates once the complex has formed. Interacts with RAN; the interaction promotes nuclear export of TERT. Interacts with XPO1. Interacts with PTPN11; the interaction retains TERT in the nucleus. Interacts with NCL (via RRM1 and C-terminal RRM4/Arg/Gly-rich domains); the interaction is important for nucleolar localization of TERT. Interacts with SMARCA4 (via the bromodomain); the interaction regulates Wnt-mediated signaling. Interacts with MCRS1 (isoform MCRS2); the interaction inhibits in vitro telomerase activity. Interacts with PIF1; the interaction has no effect on the elongation activity of TERT. Interacts with PML; the interaction recruits TERT to PML bodies and inhibits telomerase activity. Interacts with GNL3L. Interacts with isoform 1 and isoform 2 of NVL. Interacts with DHX36. Interacts with ATF7. In terms of processing, phosphorylation at Tyr-697 under oxidative stress leads to translocation of TERT to the cytoplasm and reduces its antiapoptotic activity. Dephosphorylated by SHP2/PTPN11 leading to nuclear retention. Phosphorylation at the G2/M phase at Ser-447 by DYRK2 promotes ubiquitination by the EDVP complex and degradation. Ubiquitinated by the EDVP complex, a E3 ligase complex following phosphorylation at Ser-447 by DYRK2. Ubiquitinated leads to proteasomal degradation. In terms of tissue distribution, isoform 1 and isoform 2 expressed in thymus, liver, spleen, lung, kidney and testis. High level of inactive isoform 3 in adult hippocampus, low level in heart, cortex and cerebellum.

The protein localises to the nucleus. Its subcellular location is the nucleolus. The protein resides in the nucleoplasm. It localises to the chromosome. It is found in the telomere. The protein localises to the cytoplasm. Its subcellular location is the PML body. It catalyses the reaction DNA(n) + a 2'-deoxyribonucleoside 5'-triphosphate = DNA(n+1) + diphosphate. In terms of biological role, telomerase is a ribonucleoprotein enzyme essential for the replication of chromosome termini in most eukaryotes. Active in progenitor and cancer cells. Inactive, or very low activity, in normal somatic cells. Catalytic component of the teleromerase holoenzyme complex whose main activity is the elongation of telomeres by acting as a reverse transcriptase that adds simple sequence repeats to chromosome ends by copying a template sequence within the RNA component of the enzyme. Catalyzes the RNA-dependent extension of 3'-chromosomal termini with the 6-nucleotide telomeric repeat unit, 5'-TTAGGG-3'. The catalytic cycle involves primer binding, primer extension and release of product once the template boundary has been reached or nascent product translocation followed by further extension. More active on substrates containing 2 or 3 telomeric repeats. Telomerase activity is regulated by a number of factors including telomerase complex-associated proteins, chaperones and polypeptide modifiers. Modulates Wnt signaling. Plays important roles in aging and antiapoptosis. In Rattus norvegicus (Rat), this protein is Telomerase reverse transcriptase.